The primary structure comprises 338 residues: Anthocyanidin reductase ((2S)-flavan-3-ol-forming) (338 aa).

NADP(+) is bound by residues 18–21, Lys-48, 87–90, and Tyr-168; these read TGFV and VATP.

The protein belongs to the NAD(P)-dependent epimerase/dehydratase family. Dihydroflavonol-4-reductase subfamily. As to expression, expressed in leaves and grape berries.

It carries out the reaction a (2S,3R)-flavan-3-ol + 2 NADP(+) = an anthocyanidin with a 3-hydroxy group + 2 NADPH + 2 H(+). The catalysed reaction is a (2S,3S)-flavan-3-ol + 2 NADP(+) = an anthocyanidin with a 3-hydroxy group + 2 NADPH + 2 H(+). It participates in secondary metabolite biosynthesis; flavonoid biosynthesis. Functionally, produces the terminal flavan-3-ol monomers required for the formation of proanthocyanidins or condensed tannins in leaves and flowers, as well as in the skin and seeds of developing berries. Behaves as a reductase and as a C-3 epimerase. Catalyzes the double reduction of anthocyanidins, producing a mixture of (2S,3S)- and (2S,3R)-flavan-3-ols. The enzyme catalyzes sequential hydride transfers to C-2 and C-4, respectively and epimerization at C-3 is achieved by tautomerization that occurs between the two hydride transfers. Converts cyanidin, pelargonidin and delphinidin into catechin and epicatechin, afzelechin and epiafzelechin, and gallocatechin and epigallocatechin respectively. This is Anthocyanidin reductase ((2S)-flavan-3-ol-forming) from Vitis vinifera (Grape).